Reading from the N-terminus, the 309-residue chain is ATP synthase gamma chain (309 aa).

This sequence belongs to the ATPase gamma chain family. F-type ATPases have 2 components, CF(1) - the catalytic core - and CF(0) - the membrane proton channel. CF(1) has five subunits: alpha(3), beta(3), gamma(1), delta(1), epsilon(1). CF(0) has three main subunits: a, b and c.

It is found in the cell membrane. Produces ATP from ADP in the presence of a proton gradient across the membrane. The gamma chain is believed to be important in regulating ATPase activity and the flow of protons through the CF(0) complex. The polypeptide is ATP synthase gamma chain (Salinispora tropica (strain ATCC BAA-916 / DSM 44818 / JCM 13857 / NBRC 105044 / CNB-440)).